The sequence spans 622 residues: Iron transport multicopper oxidase FET3 (622 aa).

The N-terminal stretch at 1–22 is a signal peptide; it reads MRPKLLSVEAALFLALPELARA. The Extracellular segment spans residues 23 to 553; the sequence is ATRKFDFEIG…NTLPPGFTPR (531 aa). 3 Plastocyanin-like domains span residues 31–146, 156–303, and 363–498; these read IGWV…VHDK, EEVV…VYDK, and YTEA…VEDP. An N-linked (GlcNAc...) asparagine glycan is attached at asparagine 76. Histidine 82 and histidine 84 together coordinate Cu cation. 2 N-linked (GlcNAc...) asparagine glycosylation sites follow: asparagine 89 and asparagine 114. Cu cation is bound by residues histidine 126 and histidine 128. Residues asparagine 196, asparagine 200, and asparagine 294 are each glycosylated (N-linked (GlcNAc...) asparagine). Cu cation is bound by residues histidine 414, histidine 417, and histidine 419. Asparagine 440 is a glycosylation site (N-linked (GlcNAc...) asparagine). Residues histidine 479, cysteine 480, histidine 481, and histidine 485 each contribute to the Cu cation site. Residues 554 to 574 form a helical membrane-spanning segment; that stretch reads GIVALVFSCICGILGVAVVAW. Residues 575 to 622 are Cytoplasmic-facing; it reads YGFSAPVGSTSAGALSAGLVENDSGDVHSAQKGPQETVVSPTGDARSH. Positions 597–622 are disordered; it reads DSGDVHSAQKGPQETVVSPTGDARSH.

The protein belongs to the multicopper oxidase family.

Its subcellular location is the cell membrane. Its function is as follows. Cell surface ferroxidase; part of the reductive iron assimilatory system (RIA), a siderophore-independent iron acquisition process. Required to oxidize Fe(2+) and release it from the transporter. Seems not to be involved in virulence. The polypeptide is Iron transport multicopper oxidase FET3 (Gibberella zeae (strain ATCC MYA-4620 / CBS 123657 / FGSC 9075 / NRRL 31084 / PH-1) (Wheat head blight fungus)).